Here is a 251-residue protein sequence, read N- to C-terminus: Probable transcriptional regulatory protein CC_3243 (251 aa).

This sequence belongs to the TACO1 family.

It is found in the cytoplasm. The chain is Probable transcriptional regulatory protein CC_3243 from Caulobacter vibrioides (strain ATCC 19089 / CIP 103742 / CB 15) (Caulobacter crescentus).